The chain runs to 244 residues: Precorrin-6A reductase (244 aa).

The protein belongs to the precorrin-6x reductase family.

It carries out the reaction precorrin-6B + NADP(+) = precorrin-6A + NADPH + 2 H(+). The protein operates within cofactor biosynthesis; adenosylcobalamin biosynthesis; cob(II)yrinate a,c-diamide from precorrin-2 (aerobic route): step 6/10. Functionally, catalyzes the reduction of the macrocycle of precorrin-6X into precorrin-6Y. In Mycobacterium tuberculosis (strain CDC 1551 / Oshkosh), this protein is Precorrin-6A reductase (cobK).